A 656-amino-acid chain; its full sequence is Pentatricopeptide repeat-containing protein At1g62260, mitochondrial (656 aa).

PPR repeat units lie at residues 70–104, 105–134, 135–169, 170–200, 203–227, 234–264, 280–310, 311–345, 346–372, 373–407, 408–438, 442–472, 474–508, 509–544, and 545–575; these read NTVT…DVVT, WNTM…MPSR, DSFS…NAVS, WSAM…DSSP, ALVA…YGSL, LVYA…IPDL, NVVS…MKDR, DTIS…DAHS, WNMM…TPEK, HTVS…GEKP, DPHT…VVKT, DVPV…MKLK, EVIT…GIYP, SHIT…KIEP, and QMEH…MPFE. The segment at 580-655 is type E motif; the sequence is VWGALLDACR…ERGSSWVDSS (76 aa).

This sequence belongs to the PPR family. PCMP-E subfamily.

Its subcellular location is the mitochondrion. In Arabidopsis thaliana (Mouse-ear cress), this protein is Pentatricopeptide repeat-containing protein At1g62260, mitochondrial (PCMP-E10).